Here is a 400-residue protein sequence, read N- to C-terminus: Putative cytochrome P450 133B2 (400 aa).

C348 contributes to the heme binding site.

It belongs to the cytochrome P450 family. It depends on heme as a cofactor.

In Xylella fastidiosa (strain 9a5c), this protein is Putative cytochrome P450 133B2 (cyp133B2).